The primary structure comprises 383 residues: MSWQDKIAQGLQRRRDAAAYRTRQVNEGANGRWLQSGERQYLNFSSNDYLGLSQNDEVIAAWQQGARRYGVGSGGSGHVTGYSQPHARLEQQLADWLGYPRALLFISGYAANQAVLTALTDADDRILADKLSHASLLEAAAHSPAQLRRFQHNQPEALQNLLIKPCQGQTLVVTEGVFSMDGDSAPLAALQQQTSAAGGWLLVDDAHGIGVHGEEGRGSCWLQGVQPELLVVTFGKAFGLSGAAVLCQEPVAEYLLQYARHLIYSTAMPPAQACALQAALRQVQQGDALRQQLQQRIRQFRTAAAHLPLQLGASKTAIQPLLVGDNQQSLIWAEQLRAAGLWVTAIRPPTVPPGSARLRITLSAAHQPEDIDRLLEVLYGLCH.

Arg21 is a binding site for substrate. Residue 108 to 109 (GY) coordinates pyridoxal 5'-phosphate. Position 133 (His133) interacts with substrate. Positions 179, 207, and 233 each coordinate pyridoxal 5'-phosphate. N6-(pyridoxal phosphate)lysine is present on Lys236. Substrate is bound at residue Thr350.

Belongs to the class-II pyridoxal-phosphate-dependent aminotransferase family. BioF subfamily. In terms of assembly, homodimer. Requires pyridoxal 5'-phosphate as cofactor.

The enzyme catalyses 6-carboxyhexanoyl-[ACP] + L-alanine + H(+) = (8S)-8-amino-7-oxononanoate + holo-[ACP] + CO2. It functions in the pathway cofactor biosynthesis; biotin biosynthesis. In terms of biological role, catalyzes the decarboxylative condensation of pimeloyl-[acyl-carrier protein] and L-alanine to produce 8-amino-7-oxononanoate (AON), [acyl-carrier protein], and carbon dioxide. The protein is 8-amino-7-oxononanoate synthase of Yersinia pseudotuberculosis serotype IB (strain PB1/+).